Reading from the N-terminus, the 1044-residue chain is Unconventional myosin-Ic (1044 aa).

The Myosin motor domain maps to 28 to 712 (GVQDFVLLEN…TLFATEDSLE (685 aa)). Residues Asn-69, Tyr-77, 120 to 129 (SGESGAGKTE), and 173 to 177 (NDNSS) each bind ATP. At Lys-364 the chain carries N6-methyllysine. Ser-389 is modified (phosphoserine). Lys-467 carries the N6-acetyllysine modification. Ser-517 bears the Phosphoserine mark. The tract at residues 589–611 (LLQLVEILRSKEPAYIRCIKPND) is actin-binding. IQ domains lie at 715–744 (RQSLATKIQAAWRGFHWRQKFLRVKRSAIC) and 738–767 (VKRSAICIQSWWRGTLGRRKAAKRKWAAQT). Ser-845 and Ser-1022 each carry phosphoserine. A TH1 domain is found at 866-1040 (KDNYPQSVPR…NGHLAVVAPR (175 aa)).

It belongs to the TRAFAC class myosin-kinesin ATPase superfamily. Myosin family. As to quaternary structure, interacts (via its IQ motifs) with CABP1 and CIB1; the interaction with CABP1 and CIB1 is calcium-dependent. Interacts (via tail domain) with PLEKHB1 (via PH domain); the interaction is not affected by the presence or absence of calcium and CALM. Interacts with POLR1A. Interacts with POLR2A. Component of the B-WICH complex, at least composed of SMARCA5/SNF2H, BAZ1B/WSTF, SF3B1, DEK, MYO1C, ERCC6, MYBBP1A and DDX21. Interacts (via its IQ motifs) with CALM; this precludes interaction with YWHAB. Interacts with YWHAB; this precludes interaction with CALM. Interacts with RPS6. Interacts with actin. Interacts with LLPH. Interacts with GLUT4. Interacts (via its IQ motifs) with SH3BGRL3; the interaction is dependent on calcium and takes place at membrane ruffles.

It is found in the cytoplasm. The protein resides in the nucleus. It localises to the cell cortex. The protein localises to the cell projection. Its subcellular location is the stereocilium membrane. It is found in the cytoplasmic vesicle. The protein resides in the ruffle membrane. In terms of biological role, myosins are actin-based motor molecules with ATPase activity. Unconventional myosins serve in intracellular movements. Their highly divergent tails are presumed to bind to membranous compartments, which would be moved relative to actin filaments. Involved in glucose transporter recycling in response to insulin by regulating movement of intracellular GLUT4-containing vesicles to the plasma membrane. Component of the hair cell's (the sensory cells of the inner ear) adaptation-motor complex. Acts as a mediator of adaptation of mechanoelectrical transduction in stereocilia of vestibular hair cells. Binds phosphoinositides and links the actin cytoskeleton to cellular membranes. The sequence is that of Unconventional myosin-Ic (Myo1c) from Rattus norvegicus (Rat).